The sequence spans 507 residues: ATP synthase subunit alpha, chloroplastic (507 aa).

Position 170–177 (170–177) interacts with ATP; sequence GDRQTGKT.

This sequence belongs to the ATPase alpha/beta chains family. As to quaternary structure, F-type ATPases have 2 components, CF(1) - the catalytic core - and CF(0) - the membrane proton channel. CF(1) has five subunits: alpha(3), beta(3), gamma(1), delta(1), epsilon(1). CF(0) has four main subunits: a, b, b' and c.

It is found in the plastid. The protein localises to the chloroplast thylakoid membrane. It carries out the reaction ATP + H2O + 4 H(+)(in) = ADP + phosphate + 5 H(+)(out). In terms of biological role, produces ATP from ADP in the presence of a proton gradient across the membrane. The alpha chain is a regulatory subunit. This Nicotiana tabacum (Common tobacco) protein is ATP synthase subunit alpha, chloroplastic.